We begin with the raw amino-acid sequence, 343 residues long: Glucokinase (343 aa).

Residue 18-23 coordinates ATP; the sequence is GDIGGT.

It belongs to the bacterial glucokinase family.

The protein resides in the cytoplasm. It carries out the reaction D-glucose + ATP = D-glucose 6-phosphate + ADP + H(+). The protein is Glucokinase of Brucella suis biovar 1 (strain 1330).